Here is a 119-residue protein sequence, read N- to C-terminus: Large ribosomal subunit protein bL19c (119 aa).

This sequence belongs to the bacterial ribosomal protein bL19 family.

The protein resides in the plastid. It localises to the chloroplast. The polypeptide is Large ribosomal subunit protein bL19c (Mesostigma viride (Green alga)).